A 565-amino-acid polypeptide reads, in one-letter code: Nephronectin (565 aa).

A signal peptide spans 1–19 (MDFLLALVLVSSLYLQAAA). An EGF-like 1 domain is found at 52–87 (SWGQCQPVCQPRCKHGECIGPNKCKCHPGYAGKTCN). Cystine bridges form between C56-C69, C60-C75, C77-C86, C93-C104, C100-C113, and C115-C127. Positions 89-128 (DLNECGLKPRPCKHRCMNTYGSYKCYCLNGYMLMPDGSCS) constitute an EGF-like 2; calcium-binding domain. An EGF-like 3 domain is found at 132-168 (TCSMANCQYGCDVVKGQIRCQCPSPGLQLAPDGRTCV). The EGF-like 4; calcium-binding domain occupies 169–213 (DVDECATGRASCPRFRQCVNTFGSYICKCHKGFDLMYIGGKYQCH). 6 disulfides stabilise this stretch: C173-C186, C180-C195, C197-C212, C218-C231, C225-C240, and C242-C253. The 41-residue stretch at 214–254 (DIDECSLGQYQCSSFARCYNIRGSYKCKCKEGYQGDGLTCV) folds into the EGF-like 5; calcium-binding domain. Residues 301–389 (YIPPIITNRP…KPRGDVFIPR (89 aa)) form a disordered region. A compositionally biased stretch (low complexity) spans 304 to 316 (PIITNRPTSKPTT). Pro residues predominate over residues 317–347 (RPTPKPTPIPTPPPPPPLPTELRTPLPPTTP). The short motif at 382–384 (RGD) is the Integrin interaction element. One can recognise an MAM domain in the interval 420–563 (HSCNFDHGLC…VSLKKGHCSE (144 aa)).

The protein belongs to the nephronectin family. In terms of assembly, homodimer and homotrimer. As to expression, expressed in kidney and lung and to a lower extent in brain, pregnant uterus, placenta, thyroid gland and blood vessels.

The protein localises to the secreted. It is found in the extracellular space. Its subcellular location is the extracellular matrix. In terms of biological role, functional ligand of integrin alpha-8/beta-1 in kidney development. Regulates the expression of GDNF with integrin alpha-8/beta-1 which is essential for kidney development. May also play a role in the development and function of various tissues, regulating cell adhesion, spreading and survival through the binding of several integrins. This is Nephronectin (NPNT) from Homo sapiens (Human).